A 103-amino-acid chain; its full sequence is N(4)-acetylcytidine amidohydrolase (103 aa).

Residues 6–94 (ITFFQRFQDD…IAGIYPDQTQ (89 aa)) enclose the ASCH domain. Residue lysine 21 is the Proton acceptor of the active site. Threonine 24 serves as the catalytic Nucleophile. Residue glutamate 74 is the Proton donor of the active site.

It belongs to the N(4)-acetylcytidine amidohydrolase family.

The enzyme catalyses N(4)-acetylcytidine + H2O = cytidine + acetate + H(+). It catalyses the reaction N(4)-acetyl-2'-deoxycytidine + H2O = 2'-deoxycytidine + acetate + H(+). It carries out the reaction N(4)-acetylcytosine + H2O = cytosine + acetate + H(+). Its function is as follows. Catalyzes the hydrolysis of N(4)-acetylcytidine (ac4C). This is N(4)-acetylcytidine amidohydrolase from Citrobacter koseri (strain ATCC BAA-895 / CDC 4225-83 / SGSC4696).